A 404-amino-acid polypeptide reads, in one-letter code: Phosphopentomutase (404 aa).

Mn(2+) contacts are provided by Asp10, Asp303, His308, Asp344, His345, and His356.

This sequence belongs to the phosphopentomutase family. The cofactor is Mn(2+).

The protein resides in the cytoplasm. It carries out the reaction 2-deoxy-alpha-D-ribose 1-phosphate = 2-deoxy-D-ribose 5-phosphate. The enzyme catalyses alpha-D-ribose 1-phosphate = D-ribose 5-phosphate. It functions in the pathway carbohydrate degradation; 2-deoxy-D-ribose 1-phosphate degradation; D-glyceraldehyde 3-phosphate and acetaldehyde from 2-deoxy-alpha-D-ribose 1-phosphate: step 1/2. In terms of biological role, isomerase that catalyzes the conversion of deoxy-ribose 1-phosphate (dRib-1-P) and ribose 1-phosphate (Rib-1-P) to deoxy-ribose 5-phosphate (dRib-5-P) and ribose 5-phosphate (Rib-5-P), respectively. The chain is Phosphopentomutase from Shewanella sp. (strain W3-18-1).